The following is a 301-amino-acid chain: Rhodopsin (301 aa).

At 1–18 (LHMIHLHWYQYPPMNPIM) the chain is on the extracellular side. Residues 19 to 43 (YPLLLVFMLITGILCLAGNFVTIWV) traverse the membrane as a helical segment. Residues 44–55 (FMNTKSLRTPAN) lie on the Cytoplasmic side of the membrane. The chain crosses the membrane as a helical span at residues 56-78 (LLVVNLAMSDFLMMFTMFPPMMI). Residues 79-92 (TCYYHTWTLGATFC) lie on the Extracellular side of the membrane. Cys92 and Cys169 form a disulfide bridge. Residues 93 to 115 (QVYAFLGNLCGCASIWTMVFITF) form a helical membrane-spanning segment. The 'Ionic lock' involved in activated form stabilization motif lies at 116–118 (DRY). Residues 116 to 134 (DRYNVIVKGVAGEPLSTKK) lie on the Cytoplasmic side of the membrane. Residues 135 to 155 (ATLWILTIWILSTTWCVAPFF) form a helical membrane-spanning segment. Topologically, residues 156-182 (GWNRYVPEGNLTGCGTDYLSQDILSRS) are extracellular. A glycan (N-linked (GlcNAc...) asparagine) is linked at Asn165. A helical transmembrane segment spans residues 183–204 (YLYIYSTWVYFLPLAITIYCYV). Over 205 to 245 (VIIKAVAAHEKGMRDQAKKMGIKSLRNEEAQKTSAECRLAK) the chain is Cytoplasmic. The chain crosses the membrane as a helical span at residues 246 to 267 (IAMTTVALWFIAWTPYLLINWV). The Extracellular segment spans residues 268-278 (GMFARSYLSPV). The chain crosses the membrane as a helical span at residues 279-300 (YTIWGYVFAKANAVYNPIVYAI). Lys288 carries the N6-(retinylidene)lysine modification.

Belongs to the G-protein coupled receptor 1 family. Opsin subfamily. As to quaternary structure, homodimer. Interacts with GNAQ. Post-translationally, contains one covalently linked retinal chromophore.

It is found in the cell projection. It localises to the rhabdomere membrane. Its function is as follows. Photoreceptor required for image-forming vision at low light intensity. Can use both retinal and 3-dehydroretinal as visual pigment. Light-induced isomerization of 11-cis to all-trans retinal triggers a conformational change that activates signaling via G-proteins. Signaling via GNAQ probably mediates the activation of phospholipase C. The polypeptide is Rhodopsin (RHO) (Orconectes australis (Southern cave crayfish)).